The following is a 349-amino-acid chain: Nuclear distribution protein nudE homolog 1-B (349 aa).

Positions 22-189 (VAMKYKQCSE…ELAVQQKQEK (168 aa)) form a coiled coil.

The protein belongs to the nudE family. Self-associates. Interacts with pafah1b1. In terms of processing, phosphorylated in mitosis.

The protein resides in the cytoplasm. It is found in the cytoskeleton. The protein localises to the microtubule organizing center. Its subcellular location is the centrosome. It localises to the spindle. The protein resides in the chromosome. It is found in the centromere. The protein localises to the kinetochore. Its subcellular location is the cleavage furrow. It localises to the cytoplasmic vesicle membrane. Required for centrosome duplication and formation and function of the mitotic spindle. This chain is Nuclear distribution protein nudE homolog 1-B (nde1-b), found in Xenopus laevis (African clawed frog).